The primary structure comprises 247 residues: Uridylate kinase (247 aa).

11-14 provides a ligand contact to ATP; the sequence is KASG. An involved in allosteric activation by GTP region spans residues 19-24; it reads GKQGFG. Glycine 53 contacts UMP. The ATP site is built by glycine 54 and arginine 58. Residues aspartate 73 and 134 to 141 contribute to the UMP site; that span reads TGNPFFTT. Residues threonine 161, glutamine 162, tyrosine 167, and aspartate 170 each coordinate ATP.

This sequence belongs to the UMP kinase family. Homohexamer.

The protein localises to the cytoplasm. The enzyme catalyses UMP + ATP = UDP + ADP. It participates in pyrimidine metabolism; CTP biosynthesis via de novo pathway; UDP from UMP (UMPK route): step 1/1. Allosterically activated by GTP. Inhibited by UTP. Functionally, catalyzes the reversible phosphorylation of UMP to UDP. This is Uridylate kinase from Chelativorans sp. (strain BNC1).